We begin with the raw amino-acid sequence, 159 residues long: Cyclic pyranopterin monophosphate synthase (159 aa).

Substrate contacts are provided by residues Leu-75 to His-77 and Met-113 to Glu-114. Asp-128 is a catalytic residue.

Belongs to the MoaC family. In terms of assembly, homohexamer; trimer of dimers.

The catalysed reaction is (8S)-3',8-cyclo-7,8-dihydroguanosine 5'-triphosphate = cyclic pyranopterin phosphate + diphosphate. Its pathway is cofactor biosynthesis; molybdopterin biosynthesis. Functionally, catalyzes the conversion of (8S)-3',8-cyclo-7,8-dihydroguanosine 5'-triphosphate to cyclic pyranopterin monophosphate (cPMP). In Thiobacillus denitrificans (strain ATCC 25259 / T1), this protein is Cyclic pyranopterin monophosphate synthase.